A 556-amino-acid polypeptide reads, in one-letter code: Urocanate hydratase (556 aa).

NAD(+)-binding positions include 53 to 54 (GG), Gln-131, 177 to 179 (GMG), Glu-197, 243 to 244 (NA), 264 to 268 (QTSAH), 274 to 275 (YL), and Tyr-323. Cys-411 is an active-site residue. An NAD(+)-binding site is contributed by Gly-493.

This sequence belongs to the urocanase family. Requires NAD(+) as cofactor.

The protein localises to the cytoplasm. The catalysed reaction is 4-imidazolone-5-propanoate = trans-urocanate + H2O. The protein operates within amino-acid degradation; L-histidine degradation into L-glutamate; N-formimidoyl-L-glutamate from L-histidine: step 2/3. Catalyzes the conversion of urocanate to 4-imidazolone-5-propionate. The sequence is that of Urocanate hydratase from Pseudomonas fluorescens (strain SBW25).